Consider the following 255-residue polypeptide: F-box only protein 44 (255 aa).

One can recognise an F-box domain in the interval 3–50 (VGNINELPENILLELFIHIPARQLLLRCRPVCSLWRDLIDLVTLWKRK). Positions 71–252 (FYFLRSLQRN…VTNSSITIGP (182 aa)) constitute an FBA domain.

Part of a SCF (SKP1-cullin-F-box) protein ligase complex. Interacts with SKP1 and CUL1. As to expression, expressed in brain, liver, pancreas and adipose tissue (at protein level). Widely expressed.

In terms of biological role, substrate-recognition component of the SCF (SKP1-CUL1-F-box protein)-type E3 ubiquitin ligase complex. The polypeptide is F-box only protein 44 (Fbxo44) (Mus musculus (Mouse)).